We begin with the raw amino-acid sequence, 609 residues long: Alpha-glycerophosphate oxidase (609 aa).

Asp21 to Glu49 lines the FAD pocket.

FAD is required as a cofactor.

It localises to the cytoplasm. The enzyme catalyses sn-glycerol 3-phosphate + O2 = dihydroxyacetone phosphate + H2O2. It participates in membrane lipid metabolism; glycerophospholipid metabolism. The sequence is that of Alpha-glycerophosphate oxidase (glpO) from Enterococcus casseliflavus (Enterococcus flavescens).